Reading from the N-terminus, the 271-residue chain is Small ribosomal subunit protein uS2 (271 aa).

The span at 229-242 (KERKGKDAEEELKK) shows a compositional bias: basic and acidic residues. A disordered region spans residues 229 to 271 (KERKGKDAEEELKKAAAPKAAPAAEAAPAAEAPAAPVVEAAAE). Positions 243–271 (AAAPKAAPAAEAAPAAEAPAAPVVEAAAE) are enriched in low complexity.

This sequence belongs to the universal ribosomal protein uS2 family.

The protein is Small ribosomal subunit protein uS2 of Nitratidesulfovibrio vulgaris (strain DSM 19637 / Miyazaki F) (Desulfovibrio vulgaris).